A 55-amino-acid polypeptide reads, in one-letter code: ATP synthase protein 8 (55 aa).

The chain crosses the membrane as a helical span at residues 4–24; that stretch reads LDPAPWFSMLTVSWLIIFLLI.

The protein belongs to the ATPase protein 8 family. In terms of assembly, F-type ATPases have 2 components, CF(1) - the catalytic core - and CF(0) - the membrane proton channel.

The protein resides in the mitochondrion membrane. Functionally, mitochondrial membrane ATP synthase (F(1)F(0) ATP synthase or Complex V) produces ATP from ADP in the presence of a proton gradient across the membrane which is generated by electron transport complexes of the respiratory chain. F-type ATPases consist of two structural domains, F(1) - containing the extramembraneous catalytic core and F(0) - containing the membrane proton channel, linked together by a central stalk and a peripheral stalk. During catalysis, ATP synthesis in the catalytic domain of F(1) is coupled via a rotary mechanism of the central stalk subunits to proton translocation. Part of the complex F(0) domain. Minor subunit located with subunit a in the membrane. The polypeptide is ATP synthase protein 8 (MT-ATP8) (Petromyzon marinus (Sea lamprey)).